A 721-amino-acid chain; its full sequence is K(+)-insensitive pyrophosphate-energized proton pump (721 aa).

A run of 5 helical transmembrane segments spans residues 8 to 28 (LLGV…AVWV), 57 to 77 (YRTL…AIDM), 82 to 102 (FGLT…AGYL), 136 to 156 (VMGL…YLVF), and 168 to 188 (LVAL…GGGI). Substrate is bound at residue Lys-191. Residues Asp-194, Asp-198, Asn-221, and Asp-224 each coordinate Mg(2+). 5 helical membrane-spanning segments follow: residues 247 to 267 (AIFL…IILF), 294 to 314 (ISLA…IGAF), 323 to 343 (ALAL…IVKI), 374 to 394 (YGVG…VLGI), and 416 to 436 (AGIF…GIII). Asp-446 lines the Mg(2+) pocket. Helical transmembrane passes span 483–503 (AIAS…FEIV), 527–547 (LINA…YFFS), 599–619 (FLIP…LLGW), and 621–641 (ALAG…LLMA). Positions 648, 672, and 676 each coordinate Ca(2+). Lys-679 contributes to the substrate binding site. Residues 698–718 (VVFTYVIVSTNIALGIWPSGL) traverse the membrane as a helical segment.

Belongs to the H(+)-translocating pyrophosphatase (TC 3.A.10) family. K(+)-insensitive subfamily. As to quaternary structure, homodimer. It depends on Mg(2+) as a cofactor.

The protein localises to the cell membrane. It catalyses the reaction diphosphate + H2O + H(+)(in) = 2 phosphate + 2 H(+)(out). Its function is as follows. Proton pump that utilizes the energy of pyrophosphate hydrolysis as the driving force for proton movement across the membrane. Generates a proton motive force. This chain is K(+)-insensitive pyrophosphate-energized proton pump, found in Pyrobaculum aerophilum (strain ATCC 51768 / DSM 7523 / JCM 9630 / CIP 104966 / NBRC 100827 / IM2).